The chain runs to 296 residues: 4-hydroxybenzoate octaprenyltransferase (296 aa).

8 consecutive transmembrane segments (helical) span residues 28 to 48 (IGTL…SDGI), 51 to 71 (LAVL…GCVI), 102 to 122 (LLLT…LNHL), 143 to 163 (FFPI…PMAF), 174 to 194 (AWIL…VYAM), 212 to 232 (FGRY…LLMA), 233 to 253 (VLGA…IVLL), and 274 to 294 (FLAN…HTFF).

It belongs to the UbiA prenyltransferase family. Mg(2+) serves as cofactor.

It localises to the cell inner membrane. It carries out the reaction all-trans-octaprenyl diphosphate + 4-hydroxybenzoate = 4-hydroxy-3-(all-trans-octaprenyl)benzoate + diphosphate. It functions in the pathway cofactor biosynthesis; ubiquinone biosynthesis. Functionally, catalyzes the prenylation of para-hydroxybenzoate (PHB) with an all-trans polyprenyl group. Mediates the second step in the final reaction sequence of ubiquinone-8 (UQ-8) biosynthesis, which is the condensation of the polyisoprenoid side chain with PHB, generating the first membrane-bound Q intermediate 3-octaprenyl-4-hydroxybenzoate. The polypeptide is 4-hydroxybenzoate octaprenyltransferase (Neisseria meningitidis serogroup C (strain 053442)).